Consider the following 405-residue polypeptide: Multi-drug resistance efflux pump PmrA homolog (405 aa).

The next 12 helical transmembrane spans lie at Leu13–Phe33, Leu50–Trp70, Ile88–Gly108, Leu111–Ala131, Met147–Met167, Val170–His190, Ile216–Pro236, Phe254–Leu274, Leu286–Ser306, Leu308–Val328, Met350–Ile370, and Ala374–Phe394.

The protein belongs to the major facilitator superfamily. TCR/Tet family.

The protein localises to the cell membrane. Efflux pump for various substrates. The polypeptide is Multi-drug resistance efflux pump PmrA homolog (pmrA) (Lactococcus lactis subsp. lactis (strain IL1403) (Streptococcus lactis)).